The primary structure comprises 131 residues: Small ribosomal subunit protein uS11 (131 aa).

The protein belongs to the universal ribosomal protein uS11 family. As to quaternary structure, part of the 30S ribosomal subunit. Interacts with proteins S7 and S18. Binds to IF-3.

Functionally, located on the platform of the 30S subunit, it bridges several disparate RNA helices of the 16S rRNA. Forms part of the Shine-Dalgarno cleft in the 70S ribosome. The protein is Small ribosomal subunit protein uS11 of Neisseria gonorrhoeae (strain ATCC 700825 / FA 1090).